A 320-amino-acid polypeptide reads, in one-letter code: Cytochrome f (320 aa).

The N-terminal stretch at 1–35 is a signal peptide; sequence MQTRNTFSWIKEEITRSISVSLMIYIITGASISNA. Residues tyrosine 36, cysteine 56, cysteine 59, and histidine 60 each contribute to the heme site. A helical transmembrane segment spans residues 286–306; that stretch reads VQGLLFFLASIVFAQIFLVLK.

It belongs to the cytochrome f family. As to quaternary structure, the 4 large subunits of the cytochrome b6-f complex are cytochrome b6, subunit IV (17 kDa polypeptide, petD), cytochrome f and the Rieske protein, while the 4 small subunits are PetG, PetL, PetM and PetN. The complex functions as a dimer. It depends on heme as a cofactor.

It localises to the plastid. It is found in the chloroplast thylakoid membrane. Its function is as follows. Component of the cytochrome b6-f complex, which mediates electron transfer between photosystem II (PSII) and photosystem I (PSI), cyclic electron flow around PSI, and state transitions. The chain is Cytochrome f from Gossypium hirsutum (Upland cotton).